The sequence spans 1102 residues: Phosphatidylinositol 4,5-bisphosphate 3-kinase catalytic subunit gamma isoform (1102 aa).

Residues 34–141 form the PI3K-ABD domain; that stretch reads SMELIPIEFV…PGQIHLVQRH (108 aa). Positions 217–309 constitute a PI3K-RBD domain; sequence NNCIFIVIHR…GEEIHVVLDT (93 aa). The region spanning 357–521 is the C2 PI3K-type domain; that stretch reads CDRKFRVKIR…NSMSISILLD (165 aa). Positions 541–723 constitute a PIK helical domain; that stretch reads DRVRAEMPNQ…AVILEAYLRG (183 aa). In terms of domain architecture, PI3K/PI4K catalytic spans 797 to 1080; it reads AIEKCKVMAS…QIEVCRDKGW (284 aa). The interval 803-809 is G-loop; that stretch reads VMASKKK. Residues 829–838 and 864–872 each bind ATP; these read GIIFKHGDDL and LLPYGCIST. Residues 943–951 are catalytic loop; that stretch reads GIGDRHNDN. Position 961–969 (961–969) interacts with ATP; the sequence is FHIDFGHIL. The interval 962–988 is activation loop; that stretch reads HIDFGHILGNYKSFLGINKERVPFVLT. Position 1024 is a phosphothreonine; by PKA (Thr1024). Position 1101 is a phosphoserine; by autocatalysis (Ser1101).

Belongs to the PI3/PI4-kinase family. As to quaternary structure, heterodimer of a catalytic subunit PIK3CG and a PIK3R5 or PIK3R6 regulatory subunit. Interacts with GRK2 through the PIK helical domain. Interaction with GRK2 is required for targeting to agonist-occupied receptor. Interacts with PDE3B; regulates PDE3B activity and thereby cAMP levels in cells. Interacts with TPM2. Interacts with EPHA8; regulates integrin-mediated cell adhesion to substrate. Interacts with HRAS; the interaction is required for membrane recruitment and beta-gamma G protein dimer-dependent activation of the PI3K gamma complex PIK3CG:PIK3R6. In terms of processing, autophosphorylation at Ser-1101 has no effect on the phosphatidylinositol-4,5-bisphosphate 3-kinase activity. In terms of tissue distribution, pancreas, skeletal muscle, liver and heart.

It localises to the cytoplasm. The protein resides in the cell membrane. The enzyme catalyses a 1,2-diacyl-sn-glycero-3-phospho-(1D-myo-inositol) + ATP = a 1,2-diacyl-sn-glycero-3-phospho-(1D-myo-inositol-3-phosphate) + ADP + H(+). It carries out the reaction a 1,2-diacyl-sn-glycero-3-phospho-(1D-myo-inositol-4,5-bisphosphate) + ATP = a 1,2-diacyl-sn-glycero-3-phospho-(1D-myo-inositol-3,4,5-trisphosphate) + ADP + H(+). The catalysed reaction is a 1,2-diacyl-sn-glycero-3-phospho-(1D-myo-inositol 4-phosphate) + ATP = a 1,2-diacyl-sn-glycero-3-phospho-(1D-myo-inositol-3,4-bisphosphate) + ADP + H(+). It catalyses the reaction L-seryl-[protein] + ATP = O-phospho-L-seryl-[protein] + ADP + H(+). The protein operates within phospholipid metabolism; phosphatidylinositol phosphate biosynthesis. Activated by both the alpha and the beta-gamma G proteins following stimulation of G protein-coupled receptors (GPCRs). Activation by GPCRs is assisted by the regulatory subunits (PIK3R5 or PIK3R6) leading to the translocation from the cytosol to the plasma membrane and to kinase activation. Inhibited by AS-604850 and AS-605240. Functionally, phosphoinositide-3-kinase (PI3K) that phosphorylates PtdIns(4,5)P2 (Phosphatidylinositol 4,5-bisphosphate) to generate phosphatidylinositol 3,4,5-trisphosphate (PIP3). PIP3 plays a key role by recruiting PH domain-containing proteins to the membrane, including AKT1 and PDPK1, activating signaling cascades involved in cell growth, survival, proliferation, motility and morphology. Links G-protein coupled receptor activation to PIP3 production. Involved in immune, inflammatory and allergic responses. Modulates leukocyte chemotaxis to inflammatory sites and in response to chemoattractant agents. May control leukocyte polarization and migration by regulating the spatial accumulation of PIP3 and by regulating the organization of F-actin formation and integrin-based adhesion at the leading edge. Controls motility of dendritic cells. Together with PIK3CD is involved in natural killer (NK) cell development and migration towards the sites of inflammation. Participates in T-lymphocyte migration. Regulates T-lymphocyte proliferation, activation, and cytokine production. Together with PIK3CD participates in T-lymphocyte development. Required for B-lymphocyte development and signaling. Together with PIK3CD participates in neutrophil respiratory burst. Together with PIK3CD is involved in neutrophil chemotaxis and extravasation. Together with PIK3CB promotes platelet aggregation and thrombosis. Regulates alpha-IIb/beta-3 integrins (ITGA2B/ ITGB3) adhesive function in platelets downstream of P2Y12 through a lipid kinase activity-independent mechanism. May have also a lipid kinase activity-dependent function in platelet aggregation. Involved in endothelial progenitor cell migration. Negative regulator of cardiac contractility. Modulates cardiac contractility by anchoring protein kinase A (PKA) and PDE3B activation, reducing cAMP levels. Regulates cardiac contractility also by promoting beta-adrenergic receptor internalization by binding to GRK2 and by non-muscle tropomyosin phosphorylation. Also has serine/threonine protein kinase activity: both lipid and protein kinase activities are required for beta-adrenergic receptor endocytosis. May also have a scaffolding role in modulating cardiac contractility. Contributes to cardiac hypertrophy under pathological stress. Through simultaneous binding of PDE3B to RAPGEF3 and PIK3R6 is assembled in a signaling complex in which the PI3K gamma complex is activated by RAPGEF3 and which is involved in angiogenesis. In neutrophils, participates in a phospholipase C-activating N-formyl peptide-activated GPCR (G protein-coupled receptor) signaling pathway downstream of RASGRP4-mediated Ras-activation, to promote neutrophil functional responses. The polypeptide is Phosphatidylinositol 4,5-bisphosphate 3-kinase catalytic subunit gamma isoform (PIK3CG) (Homo sapiens (Human)).